The chain runs to 261 residues: Imidazole glycerol phosphate synthase subunit HisF (261 aa).

Active-site residues include Asp-12 and Asp-131.

The protein belongs to the HisA/HisF family. Heterodimer of HisH and HisF.

Its subcellular location is the cytoplasm. The enzyme catalyses 5-[(5-phospho-1-deoxy-D-ribulos-1-ylimino)methylamino]-1-(5-phospho-beta-D-ribosyl)imidazole-4-carboxamide + L-glutamine = D-erythro-1-(imidazol-4-yl)glycerol 3-phosphate + 5-amino-1-(5-phospho-beta-D-ribosyl)imidazole-4-carboxamide + L-glutamate + H(+). Its pathway is amino-acid biosynthesis; L-histidine biosynthesis; L-histidine from 5-phospho-alpha-D-ribose 1-diphosphate: step 5/9. IGPS catalyzes the conversion of PRFAR and glutamine to IGP, AICAR and glutamate. The HisF subunit catalyzes the cyclization activity that produces IGP and AICAR from PRFAR using the ammonia provided by the HisH subunit. The chain is Imidazole glycerol phosphate synthase subunit HisF from Brucella anthropi (strain ATCC 49188 / DSM 6882 / CCUG 24695 / JCM 21032 / LMG 3331 / NBRC 15819 / NCTC 12168 / Alc 37) (Ochrobactrum anthropi).